We begin with the raw amino-acid sequence, 1767 residues long: MHEKDDLPQDSIADGIENDDESNGQEEEELDPDQGTAFVDSKEDMFVDAPEELNFDTPSKEALTTDDDDNDDLGTHFNIEKGDWEKELAGLQEQFKLLTGENDLTGEDGNTTVDIVSRFSKFLKTAKEERIQHEVALKELHGVISGRDDEIADLTTKISELSSSQPVSEMGDQAQNLEHLEAATDRIMVSLSNVFGEGELQYGSSISEKLAHLENRVSFLGAKYTEFYYGADQLRKCLASDVLDLSFQEDFGSALGAACSELFELKQKEAAFFERLSHLEDENRNFVEQVNREKEMCESMRTEFEKLKAELELEKTKCTNTKEKLSMAVTKGKALVQNRDALKHQLSEKTTELANRLTELQEKEIALESSEVMKGQLEQSLTEKTDELEKCYAELNDRSVSLEAYELTKKELEQSLAEKTKELEECLTKLQEMSTALDQSELDKGELAKSDAMVASYQEMLSVRNSIIENIETILSNIYTPEEGHSFDIVEKVRSLAEERKELTNVSQEYNRLKDLIVSIDLPEEMSQSSLESRLAWLRESFLQGKDEVNALQNRIESVSMSLSAEMEEKSNIRKELDDLSFSLKKMEETAERGSLEREEIVRRLVETSGLMTEGVEDHTSSDINLLVDRSFDKIEKQIRDSSDSSYGNEEIFEAFQSLLYVRDLEFSLCKEMLGEGELISFQVSNLSDELKIASQELAFVKEEKIALEKDLERSEEKSALLRDKLSMAIKKGKGLVQDREKFKTQLDEKKSEIEKLMLELQQLGGTVDGYKNQIDMLSRDLERTKELETELVATKEERDQLQQSLSLIDTLLQKVMKSVEIIALPVDLASEDPSEKIDRLAGYIQEVQLARVEEQEEIEKVKSEVDALTSKLAETQTALKLVEDALSTAEDNISRLTEENRNVQAAKENAELELQKAVADASSVASELDEVLATKSTLEAALMQAERNISDIISEKEEAQGRTATAEMEQEMLQKEASIQKNKLTEAHSTINSLEETLAQTESNMDSLSKQIEDDKVLTTSLKNELEKLKIEAEFERNKMAEASLTIVSHEEALMKAENSLSALQGEMVKAEGEISTLSSKLNVCMEELAGSSGNSQSKSLEIITHLDNLQMLLKDGGLISKVNEFLQRKFKSLRDVDVIARDITRNIGENGLLAGEMGNAEDDSTEAKSLLSDLDNSVNTEPENSQGSAADEDEISSSLRKMAEGVRLRNKTLENNFEGFSTSIDTLIATLMQNMTAARADVLNIVGHNSSLEEQVRSVENIVREQENTISALQKDLSSLISACGAAARELQLEVKNNLLELVQFQENENGGEMESTEDPQELHVSECAQRIKELSSAAEKACATLKLFETTNNAAATVIRDMENRLTEASVALEKAVLERDLNQTKVSSSEAKVESLEELCQDLKLQLENLRVKEEKWHEKEVELSTLYDKLLVQEQEAKENLIPASDMRTLFDKINGIEVPSVDLVNGLDPQSPYDVKKLFAIVDSVTEMQHQIDILSYGQKELNSTLAEKDLEIQGLKKATEAESTTELELVKAKNELSKLISGLEKLLGILASNNPVVDPNFSESWTLVQALEKKITSLLLESESSKSRAQELGLKLAGSEKLVDKLSLRVKEFEEKLQTKAIQPDIVQERSIFETPRAPSTSEISEIEDKGALGIKSISPVPTAAQVRTVRKGSTDHLSINIDSESEHLMNNNETDEDKGHVFKSLNMSGLIPTQGKIIADRVDGIWVSGGRVLMSRPQARLGVMVYSLLLHLWLLASIL.

Positions 1–72 are disordered; sequence MHEKDDLPQD…LTTDDDDNDD (72 aa). The Cytoplasmic segment spans residues 1-1748; the sequence is MHEKDDLPQD…RVLMSRPQAR (1748 aa). Residues 16–32 show a composition bias toward acidic residues; it reads IENDDESNGQEEEELDP. 5 coiled-coil regions span residues 276–436, 493–516, 570–590, 684–805, and 845–1082; these read LSHL…MSTA, VRSL…LKDL, KSNI…MEET, VSNL…LQQS, and IQEV…LSSK. Residues 1177–1190 are compositionally biased toward polar residues; it reads DNSVNTEPENSQGS. Positions 1177 to 1198 are disordered; that stretch reads DNSVNTEPENSQGSAADEDEIS. Coiled coils occupy residues 1251–1310, 1362–1424, 1522–1542, and 1603–1630; these read NSSL…FQEN, IRDM…WHEK, LKKA…AKNE, and LAGS…KAIQ. The helical; Anchor for type IV membrane protein transmembrane segment at 1749 to 1766 threads the bilayer; the sequence is LGVMVYSLLLHLWLLASI. Residue Leu-1767 is a topological domain, vesicular.

Interacts with SYP41. Expressed ubiquitously in roots, leaves and flowers, and, to a lower extent, in stems.

It localises to the golgi apparatus. Its subcellular location is the trans-Golgi network membrane. Its function is as follows. Tethering factor involved in vesicle fusion at the trans-Golgi network (TGN) thus being required for efficient protein trafficking to the vacuole. Implicated in resistance to salt and osmotic stresses. Modulates the cell morphology (e.g. epidermal cell file rotation (CFR) and cell expansion) in mature regions of roots and the base of hypocotyls as well as root skewing, a process leading to root movement within the soil in order to maximize anchorage and nutrient acquisition, probably by regulating microtubule stabilization independently of their orientation. The protein is Trans-Golgi network-localized SYP41-interacting protein 1 of Arabidopsis thaliana (Mouse-ear cress).